The sequence spans 293 residues: Cbb3-type cytochrome c oxidase subunit FixP (293 aa).

The span at 1–11 shows a compositional bias: basic and acidic residues; the sequence is MSTSHESHHAP. A disordered region spans residues 1–25; that stretch reads MSTSHESHHAPVDGAGGPSTTGHEW. The helical transmembrane segment at 43–63 threads the bilayer; it reads FYATIIWAFGYWVAYPAWPLV. 2 Cytochrome c domains span residues 114–201 and 209–290; these read LARA…RSLS and PAAK…HTLG. 8 residues coordinate heme c: cysteine 127, cysteine 130, histidine 131, methionine 178, cysteine 222, cysteine 225, histidine 226, and methionine 267.

The protein belongs to the CcoP / FixP family. As to quaternary structure, component of the cbb3-type cytochrome c oxidase at least composed of FixN, FixO, FixQ and FixP. It depends on heme c as a cofactor.

Its subcellular location is the cell inner membrane. It participates in energy metabolism; oxidative phosphorylation. In terms of biological role, C-type cytochrome. Part of the cbb3-type cytochrome c oxidase complex. FixP subunit is required for transferring electrons from donor cytochrome c via its heme groups to FixO subunit. From there, electrons are shuttled to the catalytic binuclear center of FixN subunit where oxygen reduction takes place. The complex also functions as a proton pump. In Azorhizobium caulinodans (strain ATCC 43989 / DSM 5975 / JCM 20966 / LMG 6465 / NBRC 14845 / NCIMB 13405 / ORS 571), this protein is Cbb3-type cytochrome c oxidase subunit FixP.